The following is a 501-amino-acid chain: Bifunctional purine biosynthesis protein PurH (501 aa).

The region spanning 1–144 is the MGS-like domain; sequence MKKRALISVF…KNFKDVVVLS (144 aa).

It belongs to the PurH family.

It catalyses the reaction (6R)-10-formyltetrahydrofolate + 5-amino-1-(5-phospho-beta-D-ribosyl)imidazole-4-carboxamide = 5-formamido-1-(5-phospho-D-ribosyl)imidazole-4-carboxamide + (6S)-5,6,7,8-tetrahydrofolate. The catalysed reaction is IMP + H2O = 5-formamido-1-(5-phospho-D-ribosyl)imidazole-4-carboxamide. It participates in purine metabolism; IMP biosynthesis via de novo pathway; 5-formamido-1-(5-phospho-D-ribosyl)imidazole-4-carboxamide from 5-amino-1-(5-phospho-D-ribosyl)imidazole-4-carboxamide (10-formyl THF route): step 1/1. It functions in the pathway purine metabolism; IMP biosynthesis via de novo pathway; IMP from 5-formamido-1-(5-phospho-D-ribosyl)imidazole-4-carboxamide: step 1/1. In Clostridium perfringens (strain 13 / Type A), this protein is Bifunctional purine biosynthesis protein PurH.